Reading from the N-terminus, the 217-residue chain is Vesicle transport through interaction with t-SNAREs homolog 1A (217 aa).

At 1-192 (MDVFERTEQN…TGIARRLATN (192 aa)) the chain is on the cytoplasmic side. Positions 36 to 97 (AVREVENDID…AQLQSSNQTN (62 aa)) form a coiled coil. The interval 90-109 (LQSSNQTNSNPWSNAPDDYQ) is disordered. Residues 123-185 (SNMLDSTSDR…KSARKIMTGI (63 aa)) enclose the t-SNARE coiled-coil homology domain. The helical; Anchor for type IV membrane protein transmembrane segment at 193–213 (KVILSIIILLLMGIIALIICL) threads the bilayer. Topologically, residues 214 to 217 (KWLR) are vesicular.

This sequence belongs to the VTI1 family. As to quaternary structure, component of the SNARE complex composed of syn7A, syn8A, vamp7A and vti1A.

It is found in the membrane. The protein resides in the cytoplasmic vesicle. Its subcellular location is the secretory vesicle membrane. The protein localises to the clathrin-coated vesicle membrane. It localises to the endosome membrane. It is found in the endoplasmic reticulum membrane. V-SNARE that mediates vesicle transport pathways through interactions with t-SNAREs on the target membrane. These interactions are proposed to mediate aspects of the specificity of vesicle trafficking and to promote fusion of the lipid bilayers. The protein is Vesicle transport through interaction with t-SNAREs homolog 1A of Dictyostelium discoideum (Social amoeba).